A 511-amino-acid polypeptide reads, in one-letter code: 2-isopropylmalate synthase (511 aa).

Residues 4–266 form the Pyruvate carboxyltransferase domain; that stretch reads IRIFDTTLRD…ETGIDLSQLY (263 aa). Residues Asp-13, His-201, His-203, and Asn-237 each contribute to the Mn(2+) site. The segment at 391-511 is regulatory domain; the sequence is VLEKIRVVSG…IAANARAQKN (121 aa).

Belongs to the alpha-IPM synthase/homocitrate synthase family. LeuA type 1 subfamily. As to quaternary structure, homodimer. The cofactor is Mn(2+).

It localises to the cytoplasm. It catalyses the reaction 3-methyl-2-oxobutanoate + acetyl-CoA + H2O = (2S)-2-isopropylmalate + CoA + H(+). Its pathway is amino-acid biosynthesis; L-leucine biosynthesis; L-leucine from 3-methyl-2-oxobutanoate: step 1/4. Catalyzes the condensation of the acetyl group of acetyl-CoA with 3-methyl-2-oxobutanoate (2-ketoisovalerate) to form 3-carboxy-3-hydroxy-4-methylpentanoate (2-isopropylmalate). The polypeptide is 2-isopropylmalate synthase (Acetivibrio thermocellus (strain ATCC 27405 / DSM 1237 / JCM 9322 / NBRC 103400 / NCIMB 10682 / NRRL B-4536 / VPI 7372) (Clostridium thermocellum)).